The following is a 341-amino-acid chain: S-adenosylmethionine:tRNA ribosyltransferase-isomerase (341 aa).

Belongs to the QueA family. Monomer.

Its subcellular location is the cytoplasm. It catalyses the reaction 7-aminomethyl-7-carbaguanosine(34) in tRNA + S-adenosyl-L-methionine = epoxyqueuosine(34) in tRNA + adenine + L-methionine + 2 H(+). The protein operates within tRNA modification; tRNA-queuosine biosynthesis. Functionally, transfers and isomerizes the ribose moiety from AdoMet to the 7-aminomethyl group of 7-deazaguanine (preQ1-tRNA) to give epoxyqueuosine (oQ-tRNA). The sequence is that of S-adenosylmethionine:tRNA ribosyltransferase-isomerase from Clostridium botulinum (strain Okra / Type B1).